The primary structure comprises 333 residues: Taste receptor type 2 member 110 (333 aa).

At 1 to 13 (MFSQIISTSDIFT) the chain is on the extracellular side. Residues 14–34 (FTIILFVELVIGILGNGFIAL) form a helical membrane-spanning segment. The Cytoplasmic segment spans residues 35–60 (VNIMDWTKRRSISSADQILTALAITR). A helical transmembrane segment spans residues 61 to 81 (FLYVWFMIICILLFMLCPHLL). Residues 82–89 (TRSEIVTS) are Extracellular-facing. Residues 90 to 110 (IGIIWIVNNHFSVWLATCLGV) traverse the membrane as a helical segment. At 111–133 (FYFLKIANFSNSLFLYLKWRVKK) the chain is on the cytoplasmic side. A helical transmembrane segment spans residues 134 to 154 (VVLMIIQVSMIFLILNLLSLS). Residues 155 to 205 (MYDQFSIDVYEGNTSYNLGDSTPFPTISLFINSSKVFVITNSSHIFLPINS) lie on the Extracellular side of the membrane. Asn186 and Asn195 each carry an N-linked (GlcNAc...) asparagine glycan. Residues 206-226 (LFMLIPFTVSLVAFLMLIFSL) traverse the membrane as a helical segment. The Cytoplasmic portion of the chain corresponds to 227–255 (WKHHKKMQVNAKPPRDASTMAHIKALQTG). The chain crosses the membrane as a helical span at residues 256 to 276 (FSFLLLYAVYLLFIVIGMLSL). Topologically, residues 277 to 283 (RLIGGKL) are extracellular. A helical membrane pass occupies residues 284-304 (ILLFDHISGIGFPISHSFVLI). Residues 305–333 (LGNNKLRQASLSVLHCLRCRSKDMDTMGP) are Cytoplasmic-facing.

The protein belongs to the G-protein coupled receptor T2R family.

It is found in the membrane. Functionally, gustducin-coupled receptor implicated in the perception of bitter compounds in the oral cavity and the gastrointestinal tract. Signals through PLCB2 and the calcium-regulated cation channel TRPM5. The chain is Taste receptor type 2 member 110 from Mus musculus (Mouse).